A 270-amino-acid chain; its full sequence is Probable ribosomal RNA small subunit methyltransferase A (270 aa).

S-adenosyl-L-methionine contacts are provided by His-19, Leu-21, Gly-46, Glu-67, Asp-92, and Asn-107.

It belongs to the class I-like SAM-binding methyltransferase superfamily. rRNA adenine N(6)-methyltransferase family. RsmA subfamily.

The protein resides in the cytoplasm. Specifically dimethylates two adjacent adenosines in the loop of a conserved hairpin near the 3'-end of 16S rRNA in the 30S particle. May play a critical role in biogenesis of 30S subunits. This Methanococcoides burtonii (strain DSM 6242 / NBRC 107633 / OCM 468 / ACE-M) protein is Probable ribosomal RNA small subunit methyltransferase A.